The chain runs to 332 residues: MKTLGEFIVEKQHEFSHATGELTALLSAIKLGAKIIHRDINKAGLVDILGASGAENVQGEVQQKLDLFANEKLKAALKARDIVAGIASEEEDEIVVFEGCEHAKYVVLMDPLDGSSNIDVNVSVGTIFSIYRRVTPVGTPVTEEDFLQPGNKQVAAGYVVYGSSTMLVYSTGCGVHAFTYDPSLGVFCLCQERMRFPEKGKTYSINEGNYIKFPNGVKKYIKFCQEEDKSTNRPYTSRYIGSLVADFHRNLLKGGIYLYPSTASHPDGKLRLLYECNPMAFLAEQAGGKASDGKERILDIIPETLHQRRSFFVGNDHMVEDVERFICEFPDA.

Glu89, Asp110, Leu112, and Asp113 together coordinate Mg(2+). Residues 113 to 116, Asn206, Tyr239, 257 to 259, and Lys269 each bind substrate; these read DGSS and YLY. Glu275 lines the Mg(2+) pocket.

It belongs to the FBPase class 1 family. In terms of assembly, homotetramer. Mg(2+) serves as cofactor.

Its subcellular location is the cytoplasm. It catalyses the reaction beta-D-fructose 1,6-bisphosphate + H2O = beta-D-fructose 6-phosphate + phosphate. It participates in carbohydrate biosynthesis; gluconeogenesis. The chain is Fructose-1,6-bisphosphatase class 1 from Escherichia coli O157:H7.